Reading from the N-terminus, the 1728-residue chain is MATVLHSESRRLYSWWWDSHIPKNSKWIQQNLSDMDSKVKAMIKLIEEDADSFARRAEMYYKKRPELMKLVEEFYRAYRALAERYDHATVELCHAHKTMAEAFPNQVPFDMIEDSASSSCSEPRTPEKMPPGIQPFYDSDSATSKRGLSQLTEYLGNSETEVESLKRTLVELGAEKEALNLQYQLSLNKFSRLEKDLEVAQKDVSGLDERASKAEIETKILAEALAKLEAERDAALLRYNESMQKITELEESFSHAQEDVKGLTNRATKAETEVENLKQAHSRLHSEKEAGLAEYNRCLEMISNLEKKVRDAEENAQNFSNQSAKAEDEIKALRHELVKVNEVKDGLRLRYQQCLETISKLEREVSHAQDNAKRLSSEVLAGAAKLKTVEDQCTLLESSNETLKLEADGLTHKLAAKDQEIFQKQNELEKFQSLIEDEHSRYLEIEVSLKTLQSLYSQSQEEQKVITSELQSRIGMLRDLETRNLKLEGDISSVKEENQNLSELNDSSMIFLETQKCEISSLKEIKEKLEEEVARHINQSSAFQEEIRRLKDEIDSLNKRYQAIMEQVNLAGLDPKSLACSVRKLQDENSKLTELCNHQSDDKDALTEKLRELDNILRKNVCLEKLLLESNTKLDGSREKTKDLQERCESLRGEKYEFIAERANLLSQLQIMTENMQKLLEKNSLLETSLSGANIELQCVKEKSKCFEEFFQLLKNDKAELIKERESLISQLNAVKEKLGVLEKKFTELEGKYADLQREKQFKNLQVEELRVSLATEKQERASYERSTDTRLADLQNNVSFLREECRSRKKEFEEELDRAVNAQVEIFILQKFIEDLEQKNFSLLIECQKYAEASSFSEKLIAELESENLEQQMEAEFLVHEIDNFRGAICQVFKALQVEADCKTADQKIAKERIPVSRVLGEINELKCSLSSAEYETQRLVIENSVLLSLLGQFQSDGMKLESEKRDVEKDLETIVHHYGMLKKDRLELLEMNRQLKSELIDREQRELELKAELQTEHLKFENLHESYMALHQDYSDALGKNKSLHLKFSELKGEICILEEENGAILEEAIALNNVSVVYQSLGSEKAEQAEAFAKNLNSLQNINSGLKQKVETLEEILKGKEVDSQELNSKLEKLQESLEEANELNDLLEHQILVKEETLRQKAIELLEAEEMLKATHNANAELCEAVEELRKDCKESRKLKGNLEKRNSELCDLAGRQDEEIKILSNLKENLESEVKLLHKEIQEHRVREEFLSSELQEKSNEFGLWDAEATSFYFDLQISAVREVLLENKVQELTGVCENLKDEAVTKTTEINQIKETVGFLEFEVSELKTQLSAYDPVVASLAEDVRSLEQNALSLMKLPVPAGRRREGVQNDEHQEAAVSQEPVGHCSTNLDNGIVLLQDMKTRIKTIKQAVAEEKKRRGKLRRRSSSHRSKDRKLFEEIELEDQFSGEIRQPRSPAMTESKNGSLMKDIPLDQVADTTSYGRSRRTSRGSSDQMLELWEEAAEPESSIKFLINNKNSKKPLIPRLHRRSRNPSVESQSEKMVGVVDKLELSRSTEDNAKILERLLSDSRRLASLRISLRDLKSKLEINEKPGKFTNPDFARVRKQMKEMEEAIFQLANTNEILSNEIEETGDVRDIYRKVVMEKSRIGSEKIEQMQQEMQNIERTVLKLEEGATKSKGRRKFSESRTVILLRDIIHKGGKRTARKKKNRFCGCMRSSGNEE.

An NAB domain is found at 13–92; the sequence is YSWWWDSHIP…ERYDHATVEL (80 aa). Coiled coils occupy residues 155–446, 476–827, 857–885, 954–1016, 1090–1323, 1403–1431, and 1576–1684; these read LGNS…LEIE, MLRD…QVEI, FSEK…EIDN, QFQS…AELQ, EQAE…KETV, LLQD…LRRR, and RRLA…TKSK. The interval 1419 to 1441 is disordered; sequence AEEKKRRGKLRRRSSSHRSKDRK. The segment covering 1424–1439 has biased composition (basic residues); sequence RRGKLRRRSSSHRSKD.

It belongs to the NET family. In terms of assembly, interacts with F-actin. In terms of tissue distribution, expressed in root meristems and at very low levels throughout mature vasculature.

It localises to the cytoplasm. Its subcellular location is the cytoskeleton. The protein localises to the cell membrane. The protein resides in the cell junction. It is found in the plasmodesma. Its function is as follows. Plant-specific actin binding protein. Associates with F-actin at the plasma membrane and plasmodesmata. May be part of a membrane-cytoskeletal adapter complex. This chain is Protein NETWORKED 1A, found in Arabidopsis thaliana (Mouse-ear cress).